Consider the following 1095-residue polypeptide: 1-phosphatidylinositol 4,5-bisphosphate phosphodiesterase (1095 aa).

The PI-PLC X-box domain occupies 319–469 (MEMDQPLAHY…LKRKILIKNK (151 aa)). Catalysis depends on residues histidine 334 and histidine 381. Lysine 467 and lysine 469 together coordinate substrate. The interval 487 to 529 (ELKTDDDPEEDASAGKPPEAAAAPAPAPEAAAAAEGAAEGGGG) is disordered. Low complexity predominate over residues 500 to 523 (AGKPPEAAAAPAPAPEAAAAAEGA). The 117-residue stretch at 550–666 (LSSMVNYAQP…GYLLKPDFMR (117 aa)) folds into the PI-PLC Y-box domain. Residues serine 579 and arginine 606 each contribute to the substrate site. Positions 666 to 794 (RRADKDFDPF…SLRTEANFPM (129 aa)) constitute a C2 domain. Disordered stretches follow at residues 842 to 863 (IEEQ…EKKE) and 1000 to 1030 (QAKM…LREK). Composition is skewed to basic and acidic residues over residues 852-863 (DAGKAKEEEKKE) and 1007-1030 (TAKE…LREK).

In terms of assembly, interacts with inaD. Abundantly expressed in the adult retina.

The enzyme catalyses a 1,2-diacyl-sn-glycero-3-phospho-(1D-myo-inositol-4,5-bisphosphate) + H2O = 1D-myo-inositol 1,4,5-trisphosphate + a 1,2-diacyl-sn-glycerol + H(+). In terms of biological role, the production of the second messenger molecules diacylglycerol (DAG) and inositol 1,4,5-trisphosphate (IP3) is mediated by activated phosphatidylinositol-specific phospholipase C enzymes. Essential component of the phototransduction pathway. Essential downstream component of a hh-signaling pathway which regulates the Duox-dependent gut immune response to bacterial uracil; required for the activation of Cad99C and consequently Cad99C-dependent endosome formation, which is essential for the Duox-dependent production of reactive oxygen species (ROS) in response to intestinal bacterial infection. The chain is 1-phosphatidylinositol 4,5-bisphosphate phosphodiesterase from Drosophila melanogaster (Fruit fly).